We begin with the raw amino-acid sequence, 785 residues long: Endonuclease MutS2 (785 aa).

Residue 332-339 participates in ATP binding; sequence GPNTGGKT. One can recognise a Smr domain in the interval 710 to 785; it reads VDLRGMDSEE…GNGVTVVELK (76 aa).

The protein belongs to the DNA mismatch repair MutS family. MutS2 subfamily. In terms of assembly, homodimer. Binds to stalled ribosomes, contacting rRNA.

Endonuclease that is involved in the suppression of homologous recombination and thus may have a key role in the control of bacterial genetic diversity. In terms of biological role, acts as a ribosome collision sensor, splitting the ribosome into its 2 subunits. Detects stalled/collided 70S ribosomes which it binds and splits by an ATP-hydrolysis driven conformational change. Acts upstream of the ribosome quality control system (RQC), a ribosome-associated complex that mediates the extraction of incompletely synthesized nascent chains from stalled ribosomes and their subsequent degradation. Probably generates substrates for RQC. In Clostridium novyi (strain NT), this protein is Endonuclease MutS2.